We begin with the raw amino-acid sequence, 208 residues long: N-(5'-phosphoribosyl)anthranilate isomerase (208 aa).

Belongs to the TrpF family.

It carries out the reaction N-(5-phospho-beta-D-ribosyl)anthranilate = 1-(2-carboxyphenylamino)-1-deoxy-D-ribulose 5-phosphate. The protein operates within amino-acid biosynthesis; L-tryptophan biosynthesis; L-tryptophan from chorismate: step 3/5. The protein is N-(5'-phosphoribosyl)anthranilate isomerase of Neisseria gonorrhoeae (strain ATCC 700825 / FA 1090).